We begin with the raw amino-acid sequence, 122 residues long: UPF0344 protein BcerKBAB4_1054 (122 aa).

The next 4 helical transmembrane spans lie at 6-26 (ITAW…YSAG), 38-58 (LMYI…VKTA), 65-85 (WYGM…MVLV), and 92-112 (PTGA…YLGL).

Belongs to the UPF0344 family.

Its subcellular location is the cell membrane. The polypeptide is UPF0344 protein BcerKBAB4_1054 (Bacillus mycoides (strain KBAB4) (Bacillus weihenstephanensis)).